Here is a 198-residue protein sequence, read N- to C-terminus: Small ribosomal subunit protein uS4z (198 aa).

Residue Ser-68 is modified to Phosphoserine. The region spanning 109–180 (RRLQTIVFKS…PGRVKRRNEK (72 aa)) is the S4 RNA-binding domain. The interval 163 to 198 (TSPFGGGRPGRVKRRNEKSASKKASGGGDADGDDEE) is disordered.

This sequence belongs to the universal ribosomal protein uS4 family. In terms of assembly, binds to the translation initiation factors TIF3E1.

The sequence is that of Small ribosomal subunit protein uS4z (RPS9B) from Arabidopsis thaliana (Mouse-ear cress).